The chain runs to 254 residues: AA9 family lytic polysaccharide monooxygenase A (254 aa).

Residues 1–19 (MKYSILGLTALSFVASAAA) form the signal peptide. Histidine 20 provides a ligand contact to Cu(2+). A Methylhistidine modification is found at histidine 20. Valine 28 is a binding site for (1,4-beta-D-glucosyl)n. N-linked (GlcNAc...) asparagine glycosylation occurs at asparagine 52. Residues cysteine 60 and cysteine 186 are joined by a disulfide bond. (1,4-beta-D-glucosyl)n-binding residues include valine 66, valine 67, aspartate 77, and asparagine 86. Position 97 (histidine 97) interacts with Cu(2+). N-linked (GlcNAc...) asparagine glycosylation is present at asparagine 129. Positions 148 and 159 each coordinate (1,4-beta-D-glucosyl)n. Positions 166 and 181 each coordinate O2. Cu(2+) is bound at residue tyrosine 183.

The protein belongs to the polysaccharide monooxygenase AA9 family. It depends on Cu(2+) as a cofactor. In terms of processing, the catalytically essential N-terminal histidine His-20 is post-translationally modified by methylation to prevent protonation of the histidine side chain, and protect the critical active site of the enzyme from oxidative damage.

Its subcellular location is the secreted. It carries out the reaction [(1-&gt;4)-beta-D-glucosyl]n+m + reduced acceptor + O2 = 4-dehydro-beta-D-glucosyl-[(1-&gt;4)-beta-D-glucosyl]n-1 + [(1-&gt;4)-beta-D-glucosyl]m + acceptor + H2O.. Its activity is regulated as follows. The polyphenol cinnamtannin B1 contained in methanolic extract of Cinnamomum cassia (cinnamon) acts as an inhibitor of catalytic activity. Lytic polysaccharide monooxygenase (LPMO) that depolymerizes crystalline and amorphous polysaccharides via the oxidation of scissile alpha- or beta-(1-4)-glycosidic bonds, yielding C1 or C4 oxidation product. Catalysis by LPMOs requires the reduction of the active-site copper from Cu(II) to Cu(I) by a reducing agent and H(2)O(2) or O(2) as a cosubstrate. Is able to cleave phosphoric acid swollen cellulose (PASC) in the presence of a reducing agent, yielding a range of cellooligosaccharides dominated by cellobiose and cellotriose. Activity is less sensitive to the reducing agent potential when cleaving xylan, suggesting that distinct catalytic mechanisms exist for xylan and glucan cleavage. The sequence is that of AA9 family lytic polysaccharide monooxygenase A from Panus similis (Lentinoid fungus).